The sequence spans 150 residues: Protein ADM2 (150 aa).

An N-terminal signal peptide occupies residues 1-25 (MAQLLMVTVTLGCISLLYLLPGTLS). The propeptide occupies 26-100 (GSLGKGLRHS…HPGPQRPTGS (75 aa)). Residues 28–102 (LGKGLRHSRP…GPQRPTGSRR (75 aa)) are disordered. A disulfide bond links C112 and C117. Y149 is subject to Tyrosine amide.

It belongs to the adrenomedullin family. In terms of tissue distribution, high expression detected in the submaxillary gland, kidney, stomach, and mesentery, followed by the pituitary, lung, pancreas, intestines, spleen, thymus and ovary. Expressed mainly in the intermediate lobe of the pituitary, with sporadic in the anterior lobe.

Its subcellular location is the secreted. Intermedin/ADM2 is a peptide hormone that plays a role as physiological regulator of gastrointestinal and cardiovascular bioactivities mediated by the CALCRL-RAMPs receptor complexes. Activates the cAMP-dependent pathway through interaction with CALCRL-RAMP3 receptor complex. The chain is Protein ADM2 from Mus musculus (Mouse).